A 184-amino-acid polypeptide reads, in one-letter code: ATP synthase subunit b, chloroplastic (184 aa).

The helical transmembrane segment at 27–49 (LATNPINLSVVLGVLIFFGKGVL) threads the bilayer.

It belongs to the ATPase B chain family. In terms of assembly, F-type ATPases have 2 components, F(1) - the catalytic core - and F(0) - the membrane proton channel. F(1) has five subunits: alpha(3), beta(3), gamma(1), delta(1), epsilon(1). F(0) has four main subunits: a(1), b(1), b'(1) and c(10-14). The alpha and beta chains form an alternating ring which encloses part of the gamma chain. F(1) is attached to F(0) by a central stalk formed by the gamma and epsilon chains, while a peripheral stalk is formed by the delta, b and b' chains.

The protein localises to the plastid. The protein resides in the chloroplast thylakoid membrane. Its function is as follows. F(1)F(0) ATP synthase produces ATP from ADP in the presence of a proton or sodium gradient. F-type ATPases consist of two structural domains, F(1) containing the extramembraneous catalytic core and F(0) containing the membrane proton channel, linked together by a central stalk and a peripheral stalk. During catalysis, ATP synthesis in the catalytic domain of F(1) is coupled via a rotary mechanism of the central stalk subunits to proton translocation. Functionally, component of the F(0) channel, it forms part of the peripheral stalk, linking F(1) to F(0). The chain is ATP synthase subunit b, chloroplastic from Eucalyptus globulus subsp. globulus (Tasmanian blue gum).